Consider the following 468-residue polypeptide: Uronate isomerase (468 aa).

This sequence belongs to the metallo-dependent hydrolases superfamily. Uronate isomerase family.

The catalysed reaction is D-glucuronate = D-fructuronate. It catalyses the reaction aldehydo-D-galacturonate = keto-D-tagaturonate. It functions in the pathway carbohydrate metabolism; pentose and glucuronate interconversion. The chain is Uronate isomerase from Bacteroides thetaiotaomicron (strain ATCC 29148 / DSM 2079 / JCM 5827 / CCUG 10774 / NCTC 10582 / VPI-5482 / E50).